The primary structure comprises 390 residues: Flavohemoprotein (390 aa).

Ser2 is subject to N-acetylserine. In terms of domain architecture, Globin spans 12–149 (PLTPTEINFL…LAQTLIDAEA (138 aa)). His96 is a heme b binding site. Residues Tyr106 and Glu148 each act as charge relay system in the active site. The reductase stretch occupies residues 157–390 (WEEFKDFRVT…EFFGPTDPDC (234 aa)). Positions 158 to 263 (EEFKDFRVTK…HAPVGTMKYD (106 aa)) constitute an FAD-binding FR-type domain. FAD is bound by residues Tyr196 and 214–217 (REYS). NADP(+) is bound at residue 277-282 (GIGITP). An FAD-binding site is contributed by 382–385 (FFGP).

Belongs to the globin family. Two-domain flavohemoproteins subfamily. The protein in the C-terminal section; belongs to the flavoprotein pyridine nucleotide cytochrome reductase family. FAD serves as cofactor. The cofactor is heme b.

Its subcellular location is the cytoplasm. The catalysed reaction is 2 nitric oxide + NADPH + 2 O2 = 2 nitrate + NADP(+) + H(+). It catalyses the reaction 2 nitric oxide + NADH + 2 O2 = 2 nitrate + NAD(+) + H(+). Functionally, is involved in NO detoxification in an aerobic process, termed nitric oxide dioxygenase (NOD) reaction that utilizes O(2) and NAD(P)H to convert NO to nitrate, which protects the fungus from various noxious nitrogen compounds. Therefore, plays a central role in the inducible response to nitrosative stress. In terms of biological role, in the presence of oxygen and NADH, it has NADH oxidase activity, which leads to the generation of superoxide and H(2)O(2). Under anaerobic conditions, it also exhibits nitric oxide reductase and FAD reductase activities. However, all these reactions are much lower than NOD activity. The protein is Flavohemoprotein of Candida norvegensis (Yeast).